Here is a 131-residue protein sequence, read N- to C-terminus: uncharacterized protein (131 aa).

The interval 16–71 is disordered; it reads MSEQERDEVLEDDDDDEDNKSSQQERDEFVEDDDNNSIQSSPSCAQPLLTQYHDDG. Residues 20 to 33 show a composition bias toward acidic residues; it reads ERDEVLEDDDDDED.

This is an uncharacterized protein from Dictyostelium discoideum (Social amoeba).